We begin with the raw amino-acid sequence, 278 residues long: 4-deoxy-L-threo-5-hexosulose-uronate ketol-isomerase (278 aa).

Zn(2+)-binding residues include H196, H198, E203, and H245.

This sequence belongs to the KduI family. Requires Zn(2+) as cofactor.

It carries out the reaction 5-dehydro-4-deoxy-D-glucuronate = 3-deoxy-D-glycero-2,5-hexodiulosonate. It functions in the pathway glycan metabolism; pectin degradation; 2-dehydro-3-deoxy-D-gluconate from pectin: step 4/5. Catalyzes the isomerization of 5-dehydro-4-deoxy-D-glucuronate to 3-deoxy-D-glycero-2,5-hexodiulosonate. The polypeptide is 4-deoxy-L-threo-5-hexosulose-uronate ketol-isomerase (Salmonella choleraesuis (strain SC-B67)).